We begin with the raw amino-acid sequence, 152 residues long: TRAPP-associated protein TCA17 (152 aa).

Belongs to the TRAPP small subunits family. Sedlin subfamily. As to quaternary structure, interacts with the TRAPP II complex; TRAPP II subunits TRS33 and TRS65 are required for this interaction.

The protein localises to the golgi apparatus. The protein resides in the trans-Golgi network. In terms of biological role, required, together with the TRAPP II subunit TRS33, for TRAPP II complex assembly or stability, and for proper Golgi localization of TRAPP and the Rab GTPase YPT31. The sequence is that of TRAPP-associated protein TCA17 (TCA17) from Saccharomyces cerevisiae (strain ATCC 204508 / S288c) (Baker's yeast).